Here is a 368-residue protein sequence, read N- to C-terminus: Flagellar P-ring protein (368 aa).

Residues 1–24 form the signal peptide; it reads MDKPMKRIFVVLVILLVLPQLALA.

The protein belongs to the FlgI family. In terms of assembly, the basal body constitutes a major portion of the flagellar organelle and consists of four rings (L,P,S, and M) mounted on a central rod.

The protein localises to the periplasm. It localises to the bacterial flagellum basal body. Its function is as follows. Assembles around the rod to form the L-ring and probably protects the motor/basal body from shearing forces during rotation. The sequence is that of Flagellar P-ring protein from Geobacter sulfurreducens (strain ATCC 51573 / DSM 12127 / PCA).